We begin with the raw amino-acid sequence, 467 residues long: Ethanolamine ammonia-lyase reactivase EutA (467 aa).

The protein belongs to the EutA family.

It localises to the bacterial microcompartment. It functions in the pathway amine and polyamine degradation; ethanolamine degradation. Functionally, reactivates suicidally inhibited ethanolamine ammonia-lyase (EAL), cyanocobalamin-inactivated EAL and O(2)-inactivated EAL; requires Mg(2+), ATP and adenosylcobalamin. Reactivation probably occurs by the ATP-dependent exchange of cobalamin. Protects EAL from inhibition by CN-B12, does not have adenosylation activity. Expression of the eut operon allows this bacteria to use ethanolamine as a carbon, nitrogen and energy source. It relies on cobalamin (vitamin B12) both as a cofactor for the ethanolamine ammonia-lyase (EAL) activity and to induce the operon. EA enhances bacterial survival in macrophages in a concentration-dependent manner, suggesting it is an important nutrient during infection. The chain is Ethanolamine ammonia-lyase reactivase EutA from Salmonella typhimurium (strain LT2 / SGSC1412 / ATCC 700720).